The chain runs to 311 residues: Ribonuclease HIII (311 aa).

One can recognise an RNase H type-2 domain in the interval 95-311 (MSIVGSDEVG…NTEKAFRLLK (217 aa)). The a divalent metal cation site is built by aspartate 101, glutamate 102, and aspartate 206.

Belongs to the RNase HII family. RnhC subfamily. It depends on Mn(2+) as a cofactor. Mg(2+) serves as cofactor.

The protein resides in the cytoplasm. It carries out the reaction Endonucleolytic cleavage to 5'-phosphomonoester.. In terms of biological role, endonuclease that specifically degrades the RNA of RNA-DNA hybrids. In Bacillus cereus (strain AH187), this protein is Ribonuclease HIII.